The chain runs to 5125 residues: Usherin (5125 aa).

The signal sequence occupies residues 1–33 (MYYLALSSGFLGQAIKTSILAYLASVLLAASQG). N-linked (GlcNAc...) asparagine glycosylation is found at asparagine 120, asparagine 229, asparagine 257, asparagine 273, asparagine 414, asparagine 447, and asparagine 468. The region spanning 273–513 (NVSLTNREIL…AVDEITIIGR (241 aa)) is the Laminin N-terminal domain. Intrachain disulfides connect cysteine 514–cysteine 523, cysteine 516–cysteine 532, cysteine 534–cysteine 545, cysteine 548–cysteine 568, cysteine 571–cysteine 580, cysteine 573–cysteine 601, cysteine 604–cysteine 613, cysteine 616–cysteine 634, cysteine 637–cysteine 651, cysteine 639–cysteine 658, cysteine 660–cysteine 669, cysteine 672–cysteine 687, cysteine 690–cysteine 704, cysteine 692–cysteine 711, cysteine 713–cysteine 722, cysteine 725–cysteine 740, cysteine 743–cysteine 755, cysteine 745–cysteine 762, cysteine 764–cysteine 773, cysteine 776–cysteine 788, cysteine 791–cysteine 804, cysteine 793–cysteine 811, cysteine 813–cysteine 822, cysteine 825–cysteine 840, cysteine 843–cysteine 857, cysteine 845–cysteine 864, cysteine 866–cysteine 875, cysteine 878–cysteine 893, cysteine 896–cysteine 909, cysteine 898–cysteine 916, cysteine 918–cysteine 927, cysteine 930–cysteine 944, cysteine 947–cysteine 959, cysteine 949–cysteine 966, cysteine 981–cysteine 995, cysteine 998–cysteine 1010, cysteine 1000–cysteine 1017, cysteine 1019–cysteine 1028, and cysteine 1031–cysteine 1046. 10 Laminin EGF-like domains span residues 514-570 (CQCH…NCKP), 571-636 (CQCH…VCKH), 637-689 (CDCN…CCRP), 690-742 (CDCN…GCEP), 743-790 (CHCN…ACEV), 791-842 (CDCN…LCLP), 843-895 (CNCE…GCQA), 896-946 (CDCD…GCLP), 947-997 (CLCH…RCRP), and 998-1048 (CHCH…ACSK). A glycan (N-linked (GlcNAc...) asparagine) is linked at asparagine 646. Asparagine 835 and asparagine 852 each carry an N-linked (GlcNAc...) asparagine glycan. An N-linked (GlcNAc...) asparagine glycan is attached at asparagine 884. Asparagine 940 carries an N-linked (GlcNAc...) asparagine glycan. N-linked (GlcNAc...) asparagine glycosylation occurs at asparagine 1007. Fibronectin type-III domains follow at residues 1054-1142 (PPPR…TKPE), 1146-1240 (GHLN…APPQ), 1241-1356 (RQEP…SAPV), and 1357-1461 (FMAA…AAPA). Asparagine 1067, asparagine 1149, asparagine 1170, asparagine 1221, asparagine 1304, and asparagine 1381 each carry an N-linked (GlcNAc...) asparagine glycan. Laminin G-like domains are found at residues 1510–1697 (TKGT…WEGC) and 1702–1879 (EEGV…QDGC). Cystine bridges form between cysteine 1660/cysteine 1697 and cysteine 1850/cysteine 1879. 29 Fibronectin type-III domains span residues 1857–1943 (TRGA…SAPH), 1945–2042 (VPTP…TPQE), 2043–2132 (APQE…LPPE), 2133–2230 (RVDP…TVPE), 2231–2318 (GVPA…APPE), 2319–2421 (GTVN…MPPG), 2425–2519 (GLLS…TTED), 2520–2613 (KPGP…TPEG), 2614–2709 (IPGP…TRPS), 2713–2806 (GVQP…THPA), 2807–2910 (LPQE…TLAG), 2914–3005 (RGAT…TWEE), 3009–3099 (GMRP…TPSG), 3380–3485 (ATEE…TRED), 3486–3577 (VPQG…TRGV), 3580–3670 (SVPP…AAPQ), 3672–3762 (VWVT…TPED), 3765–3852 (PPCN…TLEA), 3853–3950 (APVG…TLEA), 3951–4054 (PPQD…SAPS), 4055–4143 (GLMN…APPD), 4144–4251 (SQMA…APPD), 4252–4344 (GLSP…ASPA), 4345–4432 (GVSP…APPE), 4433–4517 (DMDP…TSPS), 4518–4620 (APSG…IPPL), 4625–4720 (PHLE…TGPA), 4721–4813 (PPEG…THPA), and 4814–4916 (PPSG…TKKE). Positions 1930–1950 (SDWSRGRTLGSAPHSVPTPSR) are disordered.

In terms of assembly, interacts with collagen IV and fibronectin via its laminin EGF-like domains. Interaction with collagen may be required for stable integration into the basement membrane. Interacts with NINL. Interacts with USH1C. Interacts (via the cytoplasmic region) with PDZD7. Component of USH2 complex, composed of ADGRV1, PDZD7, USH2A and WHRN. Interacts with ADGRV1/MASS1 (via N-terminal PDZ domain). Interacts (via the cytoplasmic region) with WHRN. Interacts (via the cytoplasmic region) with VEZT and MYO7A (via MyTH4-FERM domains); the interaction associates VEZT with the USH2 complex at the stereocilia base. As to expression, present in the synaptic terminals of inner ear hair cells (at protein level). Predominantly expressed in the retina and cochlea. Weakly expressed in brain and kidney. Detectable from E17 in the neural epithelium, but not in the retinal pigment epithelium (RPE) of the developing retina. After birth, it is expressed at P7 and remains expressed during adulthood.

Its subcellular location is the secreted. The protein localises to the cell projection. It is found in the stereocilium membrane. The protein resides in the photoreceptor inner segment. Involved in hearing and vision as member of the USH2 complex. In the inner ear, required for the hair bundle ankle formation, which connects growing stereocilia in developing cochlear hair cells. In retina photoreceptors, the USH2 complex is required for the maintenance of periciliary membrane complex that seems to play a role in regulating intracellular protein transport. The sequence is that of Usherin (Ush2a) from Rattus norvegicus (Rat).